The sequence spans 247 residues: 14-3-3 protein gamma-1 (247 aa).

Belongs to the 14-3-3 family. As to quaternary structure, homodimer, and heterodimer with other family members.

It localises to the cytoplasm. Adapter protein implicated in the regulation of a large spectrum of both general and specialized signaling pathways. Binds to a large number of partners, usually by recognition of a phosphoserine or phosphothreonine motif. Binding generally results in the modulation of the activity of the binding partner. The sequence is that of 14-3-3 protein gamma-1 (ywhag1) from Danio rerio (Zebrafish).